Here is an 80-residue protein sequence, read N- to C-terminus: Large ribosomal subunit protein uL24 (80 aa).

This sequence belongs to the universal ribosomal protein uL24 family. Part of the 50S ribosomal subunit.

Functionally, one of two assembly initiator proteins, it binds directly to the 5'-end of the 23S rRNA, where it nucleates assembly of the 50S subunit. One of the proteins that surrounds the polypeptide exit tunnel on the outside of the subunit. The sequence is that of Large ribosomal subunit protein uL24 from Chlorobium phaeovibrioides (strain DSM 265 / 1930) (Prosthecochloris vibrioformis (strain DSM 265)).